We begin with the raw amino-acid sequence, 490 residues long: Glutamyl-tRNA(Gln) amidotransferase subunit A (490 aa).

Catalysis depends on charge relay system residues lysine 81 and serine 156. Serine 180 functions as the Acyl-ester intermediate in the catalytic mechanism.

This sequence belongs to the amidase family. GatA subfamily. In terms of assembly, heterotrimer of A, B and C subunits.

It carries out the reaction L-glutamyl-tRNA(Gln) + L-glutamine + ATP + H2O = L-glutaminyl-tRNA(Gln) + L-glutamate + ADP + phosphate + H(+). In terms of biological role, allows the formation of correctly charged Gln-tRNA(Gln) through the transamidation of misacylated Glu-tRNA(Gln) in organisms which lack glutaminyl-tRNA synthetase. The reaction takes place in the presence of glutamine and ATP through an activated gamma-phospho-Glu-tRNA(Gln). The polypeptide is Glutamyl-tRNA(Gln) amidotransferase subunit A (Nocardia farcinica (strain IFM 10152)).